Consider the following 445-residue polypeptide: DNA polymerase IV (445 aa).

The 181-residue stretch at 49–229 folds into the UmuC domain; the sequence is LAHVDCDAFY…KPVGMIWGVG (181 aa). Mg(2+) is bound by residues aspartate 53 and aspartate 146. Residue glutamate 147 is part of the active site.

This sequence belongs to the DNA polymerase type-Y family. As to quaternary structure, monomer. Requires Mg(2+) as cofactor.

The protein resides in the cytoplasm. It carries out the reaction DNA(n) + a 2'-deoxyribonucleoside 5'-triphosphate = DNA(n+1) + diphosphate. In terms of biological role, poorly processive, error-prone DNA polymerase involved in untargeted mutagenesis. Copies undamaged DNA at stalled replication forks, which arise in vivo from mismatched or misaligned primer ends. These misaligned primers can be extended by PolIV. Exhibits no 3'-5' exonuclease (proofreading) activity. May be involved in translesional synthesis, in conjunction with the beta clamp from PolIII. The protein is DNA polymerase IV of Brucella melitensis biotype 1 (strain ATCC 23456 / CCUG 17765 / NCTC 10094 / 16M).